The chain runs to 336 residues: NAC domain-containing protein 100 (336 aa).

The NAC domain occupies 16-166 (LPPGFRFHPT…EWVICRVFQK (151 aa)). A DNA-binding region spans residues 113–172 (VGMKKTLVFYRGRAPKGQKTNWVMHEYRLEGKFSAHNLPKTAKNEWVICRVFQKSAGGKK). Positions 313–336 (RRFDSQEDPSSSTGPVDLEPFWNY) are disordered.

The protein resides in the nucleus. In terms of biological role, binds to the promoter regions of genes involved in chlorophyll catabolic processes, such as NYC1, SGR1, SGR2 and PAO. The polypeptide is NAC domain-containing protein 100 (Arabidopsis thaliana (Mouse-ear cress)).